The sequence spans 103 residues: Seminal ribonuclease (103 aa).

Cystine bridges form between C12-C70, C26-C81, C44-C96, and C51-C58. Substrate-binding positions include 27–31 (KLVNT), K52, and R71.

The protein belongs to the pancreatic ribonuclease family. In terms of assembly, homodimer; disulfide-linked.

It is found in the secreted. It catalyses the reaction an [RNA] containing cytidine + H2O = an [RNA]-3'-cytidine-3'-phosphate + a 5'-hydroxy-ribonucleotide-3'-[RNA].. It carries out the reaction an [RNA] containing uridine + H2O = an [RNA]-3'-uridine-3'-phosphate + a 5'-hydroxy-ribonucleotide-3'-[RNA].. Its function is as follows. This enzyme hydrolyzes both single- and double-stranded RNA. In Cephalophus silvicultor (Yellow-backed duiker), this protein is Seminal ribonuclease (SRN).